A 533-amino-acid polypeptide reads, in one-letter code: Na(+)/H(+) antiporter NhaB (533 aa).

11 helical membrane passes run 10–30 (IGNFLGNSPKWYKIAILSFLI), 67–87 (PGGLLAIEAVAIGMTSASQVL), 98–118 (LLLVFMVAGIYFMKQLLLFVF), 131–165 (VSLLFCLASAFLSAFLDALTVIAVIITVAVGFYSI), 209–229 (LLMHAGVGTALGGVCTMVGEP), 247–267 (IRMSPVTVPVLFAGILTCFIV), 310–330 (AFVGVWLIAGLALHLASVGLI), 355–375 (EEALPFTALLAVFFAVVAVII), 396–416 (LVIFYIANGLLSMVSDNVFVG), 454–474 (ATPNGQAAFLFLLTSALAPLI), and 481–501 (MVWMALPYTIVLSIVGVMAIQ).

The protein belongs to the NhaB Na(+)/H(+) (TC 2.A.34) antiporter family.

The protein resides in the cell inner membrane. It carries out the reaction 2 Na(+)(in) + 3 H(+)(out) = 2 Na(+)(out) + 3 H(+)(in). Its function is as follows. Na(+)/H(+) antiporter that extrudes sodium in exchange for external protons. This chain is Na(+)/H(+) antiporter NhaB, found in Shewanella sp. (strain ANA-3).